Reading from the N-terminus, the 503-residue chain is TGF-beta receptor type-1 (503 aa).

Residues 1–33 form the signal peptide; it reads MEAAVAAPRPRLLLLVLAAAAAAAAALLPGATA. Residues 34-126 are Extracellular-facing; it reads LQCFCHLCTK…SSPGLGPVEL (93 aa). 5 disulfide bridges follow: Cys36–Cys54, Cys38–Cys41, Cys48–Cys71, Cys86–Cys100, and Cys101–Cys106. Asn45 carries N-linked (GlcNAc...) asparagine glycosylation. Residues 127–147 traverse the membrane as a helical segment; the sequence is AAVIAGPVCFVCISLMLMVYI. Over 148–503 the chain is Cytoplasmic; it reads CHNRTVIHHR…QLSQQEGIKM (356 aa). Ser165 carries the phosphoserine modification. The GS domain maps to 175–204; sequence TTLKDLIYDMTTSGSGSGLPLLVQRTIART. Phosphothreonine; by TGFBR2 is present on residues Thr185 and Thr186. Ser187, Ser189, and Ser191 each carry phosphoserine; by TGFBR2. The short motif at 193 to 194 is the FKBP1A-binding element; it reads LP. The 291-residue stretch at 205–495 folds into the Protein kinase domain; the sequence is IVLQESIGKG…LRIKKTLSQL (291 aa). ATP-binding positions include 211 to 219 and Lys232; that span reads IGKGRFGEV. A Glycyl lysine isopeptide (Lys-Gly) (interchain with G-Cter in ubiquitin) cross-link involves residue Lys268. Asp333 (proton acceptor) is an active-site residue. Residue Lys391 forms a Glycyl lysine isopeptide (Lys-Gly) (interchain with G-Cter in SUMO) linkage.

Belongs to the protein kinase superfamily. TKL Ser/Thr protein kinase family. TGFB receptor subfamily. In terms of assembly, homodimer; in the endoplasmic reticulum but also at the cell membrane. Heterohexamer; TGFB1, TGFB2 and TGFB3 homodimeric ligands assemble a functional receptor composed of two TGFBR1 and TGFBR2 heterodimers to form a ligand-receptor heterohexamer. The respective affinity of TGBRB1 and TGFBR2 for the ligands may modulate the kinetics of assembly of the receptor and may explain the different biological activities of TGFB1, TGFB2 and TGFB3. Component of a complex composed of TSC22D1 (via N-terminus), TGFBR1 and TGFBR2; the interaction between TSC22D1 and TGFBR1 is inhibited by SMAD7 and promoted by TGFB1. Interacts with CD109; inhibits TGF-beta receptor activation in keratinocytes. Interacts with RBPMS. Interacts (unphosphorylated) with FKBP1A; prevents TGFBR1 phosphorylation by TGFBR2 and stabilizes it in the inactive conformation. Interacts with SMAD2, SMAD3 and ZFYVE9; ZFYVE9 recruits SMAD2 and SMAD3 to the TGF-beta receptor. Interacts with TRAF6 and MAP3K7; induces MAP3K7 activation by TRAF6. Interacts with PARD6A; involved in TGF-beta induced epithelial to mesenchymal transition. Interacts with NEDD4L. Interacts with SMAD7, SMURF1 and SMURF2; SMAD7 recruits NEDD4L, SMURF1 and SMURF2 to the TGF-beta receptor. Interacts with USP15 and VPS39. Interacts with SDCBP (via C-terminus). Interacts with CAV1 and this interaction is impaired in the presence of SDCBP. Interacts with APPL1; interaction is TGF beta dependent; mediates trafficking of the TGFBR1 from the endosomes to the nucleus via microtubules in a TRAF6-dependent manner. Interacts with GPR50; this interaction promotes the constitutive activation of SMAD signaling pathway. Mg(2+) serves as cofactor. Requires Mn(2+) as cofactor. Phosphorylated at basal levels in the absence of ligand. Activated upon phosphorylation by TGFBR2, mainly in the GS domain. Phosphorylation in the GS domain abrogates FKBP1A-binding. In terms of processing, N-Glycosylated. Post-translationally, ubiquitinated; undergoes ubiquitination catalyzed by several E3 ubiquitin ligases including SMURF1, SMURF2 and NEDD4L2. Results in the proteasomal and/or lysosomal degradation of the receptor thereby negatively regulating its activity. Deubiquitinated by USP15, leading to stabilization of the protein and enhanced TGF-beta signal. Its ubiquitination and proteasome-mediated degradation is negatively regulated by SDCBP. Ubiquitinated by BFAR via'Lys-63'-linked ubiquitination at Lys-268, leading to TGF-beta signaling activation. In terms of tissue distribution, found in all tissues examined, most abundant in placenta and least abundant in brain and heart. Expressed in a variety of cancer cell lines.

The protein localises to the cell membrane. Its subcellular location is the cell junction. The protein resides in the tight junction. It is found in the cell surface. It localises to the membrane raft. The catalysed reaction is L-threonyl-[receptor-protein] + ATP = O-phospho-L-threonyl-[receptor-protein] + ADP + H(+). The enzyme catalyses L-seryl-[receptor-protein] + ATP = O-phospho-L-seryl-[receptor-protein] + ADP + H(+). Its activity is regulated as follows. Kept in an inactive conformation by FKBP1A preventing receptor activation in absence of ligand. CD109 is another inhibitor of the receptor. Transmembrane serine/threonine kinase forming with the TGF-beta type II serine/threonine kinase receptor, TGFBR2, the non-promiscuous receptor for the TGF-beta cytokines TGFB1, TGFB2 and TGFB3. Transduces the TGFB1, TGFB2 and TGFB3 signal from the cell surface to the cytoplasm and is thus regulating a plethora of physiological and pathological processes including cell cycle arrest in epithelial and hematopoietic cells, control of mesenchymal cell proliferation and differentiation, wound healing, extracellular matrix production, immunosuppression and carcinogenesis. The formation of the receptor complex composed of 2 TGFBR1 and 2 TGFBR2 molecules symmetrically bound to the cytokine dimer results in the phosphorylation and the activation of TGFBR1 by the constitutively active TGFBR2. Activated TGFBR1 phosphorylates SMAD2 which dissociates from the receptor and interacts with SMAD4. The SMAD2-SMAD4 complex is subsequently translocated to the nucleus where it modulates the transcription of the TGF-beta-regulated genes. This constitutes the canonical SMAD-dependent TGF-beta signaling cascade. Also involved in non-canonical, SMAD-independent TGF-beta signaling pathways. For instance, TGFBR1 induces TRAF6 autoubiquitination which in turn results in MAP3K7 ubiquitination and activation to trigger apoptosis. Also regulates epithelial to mesenchymal transition through a SMAD-independent signaling pathway through PARD6A phosphorylation and activation. In Homo sapiens (Human), this protein is TGF-beta receptor type-1 (TGFBR1).